Reading from the N-terminus, the 77-residue chain is Thioredoxin (77 aa).

Catalysis depends on nucleophile residues C11 and C14. C11 and C14 are joined by a disulfide.

It belongs to the glutaredoxin family.

Functionally, does not function as a glutathione-disulfide oxidoreductase in the presence of glutathione and glutathione reductase. Has low thioredoxin activity in vitro. In Methanothermobacter thermautotrophicus (strain ATCC 29096 / DSM 1053 / JCM 10044 / NBRC 100330 / Delta H) (Methanobacterium thermoautotrophicum), this protein is Thioredoxin.